Here is a 273-residue protein sequence, read N- to C-terminus: Formamidopyrimidine-DNA glycosylase (273 aa).

Catalysis depends on proline 2, which acts as the Schiff-base intermediate with DNA. Glutamate 3 functions as the Proton donor in the catalytic mechanism. Lysine 58 serves as the catalytic Proton donor; for beta-elimination activity. DNA contacts are provided by histidine 91 and arginine 110. Residues 238–272 form an FPG-type zinc finger; the sequence is QVYGKTDQPCARCATPIEKIKVGGRGTHFCPSCQK. The Proton donor; for delta-elimination activity role is filled by arginine 262.

Belongs to the FPG family. Monomer. The cofactor is Zn(2+).

The catalysed reaction is Hydrolysis of DNA containing ring-opened 7-methylguanine residues, releasing 2,6-diamino-4-hydroxy-5-(N-methyl)formamidopyrimidine.. It carries out the reaction 2'-deoxyribonucleotide-(2'-deoxyribose 5'-phosphate)-2'-deoxyribonucleotide-DNA = a 3'-end 2'-deoxyribonucleotide-(2,3-dehydro-2,3-deoxyribose 5'-phosphate)-DNA + a 5'-end 5'-phospho-2'-deoxyribonucleoside-DNA + H(+). Involved in base excision repair of DNA damaged by oxidation or by mutagenic agents. Acts as a DNA glycosylase that recognizes and removes damaged bases. Has a preference for oxidized purines, such as 7,8-dihydro-8-oxoguanine (8-oxoG). Has AP (apurinic/apyrimidinic) lyase activity and introduces nicks in the DNA strand. Cleaves the DNA backbone by beta-delta elimination to generate a single-strand break at the site of the removed base with both 3'- and 5'-phosphates. This chain is Formamidopyrimidine-DNA glycosylase (mutM), found in Streptococcus mutans serotype c (strain ATCC 700610 / UA159).